Reading from the N-terminus, the 65-residue chain is pH-response transcription factor pacC/RIM101 (65 aa).

The segment at 16–40 (LTCQWNSCRTTTVKRDHITSHIRVH) adopts a C2H2-type 1 zinc-finger fold. A C2H2-type 2; degenerate zinc finger spans residues 46-65 (HKCEFCGKSFKRPQDLKKHV).

The protein belongs to the pacC/RIM101 family.

It localises to the nucleus. Its function is as follows. Transcription factor that mediates regulation of both acid- and alkaline-expressed genes in response to ambient pH. At alkaline ambient pH, activates transcription of alkaline-expressed genes (including pac1 itself) and represses transcription of acid-expressed genes. The protein is pH-response transcription factor pacC/RIM101 (pac1) of Colletotrichum gloeosporioides (Anthracnose fungus).